The primary structure comprises 296 residues: 4-hydroxybenzoate octaprenyltransferase (296 aa).

The next 9 membrane-spanning stretches (helical) occupy residues 29–49 (IGIY…AEGV), 55–75 (LFIF…INDY), 102–122 (ALVL…FTNA), 124–141 (TIWL…YPFM), 146–166 (FYPQ…AFTA), 169–189 (GSLP…TVAY), 216–236 (ADRL…LLAG), 239–259 (FELG…FVWE), and 271–291 (CFNA…GIVL).

The protein belongs to the UbiA prenyltransferase family. It depends on Mg(2+) as a cofactor.

It localises to the cell inner membrane. It carries out the reaction all-trans-octaprenyl diphosphate + 4-hydroxybenzoate = 4-hydroxy-3-(all-trans-octaprenyl)benzoate + diphosphate. It participates in cofactor biosynthesis; ubiquinone biosynthesis. In terms of biological role, catalyzes the prenylation of para-hydroxybenzoate (PHB) with an all-trans polyprenyl group. Mediates the second step in the final reaction sequence of ubiquinone-8 (UQ-8) biosynthesis, which is the condensation of the polyisoprenoid side chain with PHB, generating the first membrane-bound Q intermediate 3-octaprenyl-4-hydroxybenzoate. The protein is 4-hydroxybenzoate octaprenyltransferase of Ectopseudomonas mendocina (strain ymp) (Pseudomonas mendocina).